Here is a 1708-residue protein sequence, read N- to C-terminus: Clathrin heavy chain 2 (1708 aa).

The globular terminal domain stretch occupies residues Met-1–Tyr-492. WD40-like repeat stretches follow at residues Phe-25–Thr-67, Ala-68–Gln-113, Val-114–Ala-155, Asn-156–Glu-205, Ala-206–Gln-270, Asp-271–Asp-314, and Pro-315–Asn-343. The binding site for the uncoating ATPase, involved in lattice disassembly stretch occupies residues Glu-462–Asp-478. The segment at Ile-493–Arg-536 is flexible linker. Positions Thr-537–Pro-648 are distal segment. Positions Thr-537 to Tyr-1708 are heavy chain arm. CHCR repeat units follow at residues Gln-551–Val-697, Ala-700–Phe-842, Ile-847–Asp-986, Leu-993–Ala-1138, Phe-1142–Ala-1283, Leu-1288–Asn-1434, and Leu-1437–Phe-1580. The proximal segment stretch occupies residues Val-653 to Tyr-1708. The involved in binding clathrin light chain stretch occupies residues Ala-1227–Lys-1536. Residues Ser-1564 to Tyr-1708 are trimerization.

This sequence belongs to the clathrin heavy chain family. As to quaternary structure, clathrin triskelions, composed of 3 heavy chains and 3 light chains, are the basic subunits of the clathrin coat.

It localises to the cytoplasmic vesicle membrane. It is found in the membrane. The protein resides in the coated pit. Functionally, clathrin is the major protein of the polyhedral coat of coated pits and vesicles. This chain is Clathrin heavy chain 2, found in Oryza sativa subsp. japonica (Rice).